Reading from the N-terminus, the 420-residue chain is Phospholipase A1-II 3 (420 aa).

Residues 1-21 (MCCFLLVSVLLATTLTDVASA) form the signal peptide. N231 is a glycosylation site (N-linked (GlcNAc...) asparagine). The active-site Acyl-ester intermediate is the S240. S240 serves as the catalytic Charge relay system. The N-linked (GlcNAc...) asparagine glycan is linked to N294. Active-site charge relay system residues include D305 and H343. Residues 367 to 388 (VVDRDLALVNKEVDALRDEYQV) are a coiled coil. N-linked (GlcNAc...) asparagine glycosylation is present at N403.

This sequence belongs to the AB hydrolase superfamily. Lipase family.

The protein localises to the secreted. Acylhydrolase that catalyzes the hydrolysis of phospholipids at the sn-1 position. The protein is Phospholipase A1-II 3 of Oryza sativa subsp. indica (Rice).